The primary structure comprises 659 residues: Cytochrome bo(3) ubiquinol oxidase subunit 1 (659 aa).

The Extracellular portion of the chain corresponds to 1–14; that stretch reads MFGKLSLNSIPYHD. A helical transmembrane segment spans residues 15 to 35; the sequence is PIIMITCCVVILVFLVISIII. Residues 36–56 are Cytoplasmic-facing; it reads TIAQKWQYLWNEWCCTVDHKK. The chain crosses the membrane as a helical span at residues 57–77; it reads IAKMYIFLAFIMLFRGFADAI. The a ubiquinone site is built by Arg-71, Asp-75, and His-101. The Extracellular portion of the chain corresponds to 78–109; the sequence is MMRMQQFLVSSYHGNGTGFLPPHHYDQIFTAH. His-109 serves as a coordination point for heme b. The chain crosses the membrane as a helical span at residues 110-130; it reads GVIMIFFVAMPLVIGLMNFVV. Residues 131–148 are Cytoplasmic-facing; sequence PLQIGSRDVAFPFLNNLS. The helical transmembrane segment at 149–169 threads the bilayer; sequence LWLTIFSALLMNVSLGIGEFA. Residues 170–192 are Extracellular-facing; that stretch reads QTGWLAYPPLSELQYSPGVGVDY. A heme b-binding site is contributed by Trp-173. The chain crosses the membrane as a helical span at residues 193-213; it reads WIWSLQISGIGTTLTAINFLV. The Cytoplasmic portion of the chain corresponds to 214–235; sequence TIIKMRSSGMNWFKIPVFTWTS. The helical transmembrane segment at 236–256 threads the bilayer; sequence FCTNILIIASFPVLTVSLLLL. At 257 to 280 the chain is on the extracellular side; it reads TLDRYLGFHFFTNDFGGNMMMYVN. The helical transmembrane segment at 281–301 threads the bilayer; sequence LIWIWGHPEVYILILPVFGIF. His-287 serves as a coordination point for Cu(2+). A cross-link (1'-histidyl-3'-tyrosine (His-Tyr)) is located at residues 287-291; sequence HPEVY. Tyr-291 is a Fe(II)-heme o binding site. At 302 to 318 the chain is on the cytoplasmic side; that stretch reads SEVVATFSSKELFGYTS. The chain crosses the membrane as a helical span at residues 319 to 339; the sequence is LIWATIVITILSFIVWLHHFF. Cu(2+) contacts are provided by His-336 and His-337. At 340 to 350 the chain is on the extracellular side; sequence TMGASANVNAF. Residues 351-371 form a helical membrane-spanning segment; the sequence is FGITTMIISIPTGVKIFNWLF. Residues 372-382 are Cytoplasmic-facing; that stretch reads TMYRGNVRINS. The helical transmembrane segment at 383-403 threads the bilayer; it reads IMLWTIGFLITFSIGGMAGVL. The Extracellular portion of the chain corresponds to 404–416; the sequence is LSLPVIDFSLHNS. Positions 414 and 422 each coordinate Fe(II)-heme o. A helical membrane pass occupies residues 417–437; the sequence is LFLVAHFHNVIIGGVVFGCFA. Position 424 (His-424) interacts with heme b. The Cytoplasmic portion of the chain corresponds to 438–459; that stretch reads GITYWFPKLFGFMLSEKWGKRA. Residues 460-480 form a helical membrane-spanning segment; it reads FWCWFFGFFCAFMPLYALGLM. Over 481 to 499 the chain is Extracellular; sequence GMTRRLSQNINPQFHSMLT. Residues Arg-484 and Arg-485 each coordinate heme b. The helical transmembrane segment at 500–520 threads the bilayer; that stretch reads IAALGTILIFIGIVFQIIQIF. The Cytoplasmic segment spans residues 521–587; the sequence is VSIRDRNLNR…KLPILYTSFH (67 aa). A helical transmembrane segment spans residues 588-608; it reads MPKNTKFGFLIGFFAFLLGFS. Ala-609 is a topological domain (extracellular). A helical membrane pass occupies residues 610–630; that stretch reads VWYIFWLFFISFFVIIYLLVI. The Cytoplasmic segment spans residues 631–659; it reads KSLDTNCDYIISIEEIKEIEKCINIKKMD.

The protein belongs to the heme-copper respiratory oxidase family. The cytochrome bo(3) ubiquinol oxidase complex is a heterooctamer of two A chains, two B chains, two C chains and two D chains. Requires Cu(2+) as cofactor. Heme b is required as a cofactor. Fe(II)-heme o serves as cofactor.

The protein resides in the cell membrane. It carries out the reaction 2 a ubiquinol + O2 + n H(+)(in) = 2 a ubiquinone + 2 H2O + n H(+)(out). In terms of biological role, cytochrome bo(3) ubiquinol oxidase is the terminal enzyme in the aerobic respiratory chain. Catalyzes the four-electron reduction of O2 to water, using a ubiquinol as a membrane soluble electron donor for molecular oxygen reduction. Has proton pump activity across the membrane in addition to electron transfer, pumping 2 protons/electron and generating a proton motive force. All the redox centers of this enzyme complex are located within the largest subunit, subunit I. Protons are probably pumped via D- and K- channels found in this subunit. This Buchnera aphidicola subsp. Baizongia pistaciae (strain Bp) protein is Cytochrome bo(3) ubiquinol oxidase subunit 1 (cyoB).